Here is a 554-residue protein sequence, read N- to C-terminus: 3-(3-hydroxy-phenyl)propionate/3-hydroxycinnamic acid hydroxylase (554 aa).

FAD is bound by residues 17-46 and 285-295; these read QVAI…VVEK and FRIDRVLLAGD.

Belongs to the PheA/TfdB FAD monooxygenase family. It depends on FAD as a cofactor.

The enzyme catalyses 3-(3-hydroxyphenyl)propanoate + NADH + O2 + H(+) = 3-(2,3-dihydroxyphenyl)propanoate + NAD(+) + H2O. It catalyses the reaction (2E)-3-(3-hydroxyphenyl)prop-2-enoate + NADH + O2 + H(+) = (2E)-3-(2,3-dihydroxyphenyl)prop-2-enoate + NAD(+) + H2O. It participates in aromatic compound metabolism; 3-phenylpropanoate degradation. Its function is as follows. Catalyzes the insertion of one atom of molecular oxygen into position 2 of the phenyl ring of 3-(3-hydroxyphenyl)propionate (3-HPP) and hydroxycinnamic acid (3HCI). In Escherichia coli (strain K12 / DH10B), this protein is 3-(3-hydroxy-phenyl)propionate/3-hydroxycinnamic acid hydroxylase.